Reading from the N-terminus, the 242-residue chain is 1-(5-phosphoribosyl)-5-[(5-phosphoribosylamino)methylideneamino] imidazole-4-carboxamide isomerase (242 aa).

Asp8 serves as the catalytic Proton acceptor. Residue Asp129 is the Proton donor of the active site.

This sequence belongs to the HisA/HisF family.

It localises to the cytoplasm. The enzyme catalyses 1-(5-phospho-beta-D-ribosyl)-5-[(5-phospho-beta-D-ribosylamino)methylideneamino]imidazole-4-carboxamide = 5-[(5-phospho-1-deoxy-D-ribulos-1-ylimino)methylamino]-1-(5-phospho-beta-D-ribosyl)imidazole-4-carboxamide. It participates in amino-acid biosynthesis; L-histidine biosynthesis; L-histidine from 5-phospho-alpha-D-ribose 1-diphosphate: step 4/9. The chain is 1-(5-phosphoribosyl)-5-[(5-phosphoribosylamino)methylideneamino] imidazole-4-carboxamide isomerase from Clostridium botulinum (strain Langeland / NCTC 10281 / Type F).